Here is a 507-residue protein sequence, read N- to C-terminus: Histidine ammonia-lyase (507 aa).

Positions 141–143 (ASG) form a cross-link, 5-imidazolinone (Ala-Gly). The residue at position 142 (S142) is a 2,3-didehydroalanine (Ser).

This sequence belongs to the PAL/histidase family. Contains an active site 4-methylidene-imidazol-5-one (MIO), which is formed autocatalytically by cyclization and dehydration of residues Ala-Ser-Gly.

The protein localises to the cytoplasm. It carries out the reaction L-histidine = trans-urocanate + NH4(+). Its pathway is amino-acid degradation; L-histidine degradation into L-glutamate; N-formimidoyl-L-glutamate from L-histidine: step 1/3. The polypeptide is Histidine ammonia-lyase (Burkholderia ambifaria (strain ATCC BAA-244 / DSM 16087 / CCUG 44356 / LMG 19182 / AMMD) (Burkholderia cepacia (strain AMMD))).